The following is a 101-amino-acid chain: Large ribosomal subunit protein bL21 (101 aa).

The protein belongs to the bacterial ribosomal protein bL21 family. Part of the 50S ribosomal subunit. Contacts protein L20.

Its function is as follows. This protein binds to 23S rRNA in the presence of protein L20. In Thermus thermophilus (strain ATCC BAA-163 / DSM 7039 / HB27), this protein is Large ribosomal subunit protein bL21.